Consider the following 288-residue polypeptide: Homoserine kinase (288 aa).

ATP is bound at residue 79–89 (PPARGLGSSSA).

Belongs to the GHMP kinase family. Homoserine kinase subfamily.

It is found in the cytoplasm. It catalyses the reaction L-homoserine + ATP = O-phospho-L-homoserine + ADP + H(+). Its pathway is amino-acid biosynthesis; L-threonine biosynthesis; L-threonine from L-aspartate: step 4/5. Functionally, catalyzes the ATP-dependent phosphorylation of L-homoserine to L-homoserine phosphate. The sequence is that of Homoserine kinase from Listeria innocua serovar 6a (strain ATCC BAA-680 / CLIP 11262).